We begin with the raw amino-acid sequence, 271 residues long: Acyl-[acyl-carrier-protein]--UDP-N-acetylglucosamine O-acyltransferase (271 aa).

Belongs to the transferase hexapeptide repeat family. LpxA subfamily. As to quaternary structure, homotrimer.

Its subcellular location is the cytoplasm. It carries out the reaction a (3R)-hydroxyacyl-[ACP] + UDP-N-acetyl-alpha-D-glucosamine = a UDP-3-O-[(3R)-3-hydroxyacyl]-N-acetyl-alpha-D-glucosamine + holo-[ACP]. It functions in the pathway glycolipid biosynthesis; lipid IV(A) biosynthesis; lipid IV(A) from (3R)-3-hydroxytetradecanoyl-[acyl-carrier-protein] and UDP-N-acetyl-alpha-D-glucosamine: step 1/6. In terms of biological role, involved in the biosynthesis of lipid A, a phosphorylated glycolipid that anchors the lipopolysaccharide to the outer membrane of the cell. The protein is Acyl-[acyl-carrier-protein]--UDP-N-acetylglucosamine O-acyltransferase of Rhizobium rhizogenes (strain K84 / ATCC BAA-868) (Agrobacterium radiobacter).